Here is an 81-residue protein sequence, read N- to C-terminus: Small ribosomal subunit protein bS20 (81 aa).

Belongs to the bacterial ribosomal protein bS20 family.

Functionally, binds directly to 16S ribosomal RNA. The polypeptide is Small ribosomal subunit protein bS20 (Mycoplasma capricolum subsp. capricolum (strain California kid / ATCC 27343 / NCTC 10154)).